We begin with the raw amino-acid sequence, 199 residues long: mRNA export protein mlo3 (199 aa).

Residues 1 to 41 (MSMELDQSLDAIIASKPKGGIRKRRARSNKPKPTKNAKPAV) form a disordered region. Over residues 19–35 (GGIRKRRARSNKPKPTK) the composition is skewed to basic residues. The RRM domain occupies 55-134 (SKIIVSNLPT…RKMKVEIILD (80 aa)). A disordered region spans residues 144–199 (ARVSPASNASATASKNGAKSSKRKTTRRRRTPNRPKKSAEELDKEMDDYFGSNEKE). Positions 148 to 161 (PASNASATASKNGA) are enriched in polar residues. Over residues 163–179 (SSKRKTTRRRRTPNRPK) the composition is skewed to basic residues.

Interacts with rpn15/dss1, mex67 and uap56.

It is found in the nucleus. In terms of biological role, has a role in the mRNA export process. Interferes with mitotic chromosome segregation when overexpressed. This is mRNA export protein mlo3 (mlo3) from Schizosaccharomyces pombe (strain 972 / ATCC 24843) (Fission yeast).